Here is a 415-residue protein sequence, read N- to C-terminus: Serine hydroxymethyltransferase (415 aa).

(6S)-5,6,7,8-tetrahydrofolate is bound by residues Leu119 and 123 to 125; that span reads GHL. Lys228 carries the post-translational modification N6-(pyridoxal phosphate)lysine. 353 to 355 provides a ligand contact to (6S)-5,6,7,8-tetrahydrofolate; that stretch reads SAF.

Belongs to the SHMT family. Homodimer. It depends on pyridoxal 5'-phosphate as a cofactor.

It is found in the cytoplasm. It carries out the reaction (6R)-5,10-methylene-5,6,7,8-tetrahydrofolate + glycine + H2O = (6S)-5,6,7,8-tetrahydrofolate + L-serine. The protein operates within one-carbon metabolism; tetrahydrofolate interconversion. It participates in amino-acid biosynthesis; glycine biosynthesis; glycine from L-serine: step 1/1. Functionally, catalyzes the reversible interconversion of serine and glycine with tetrahydrofolate (THF) serving as the one-carbon carrier. Also exhibits THF-independent aldolase activity toward beta-hydroxyamino acids, producing glycine and aldehydes, via a retro-aldol mechanism. The chain is Serine hydroxymethyltransferase from Halobacterium salinarum (strain ATCC 29341 / DSM 671 / R1).